We begin with the raw amino-acid sequence, 116 residues long: Cell cycle protein GpsB (116 aa).

Residues 32–69 (LDDVIKDYETYSALVKELREENSRLKQELSKRMQEAPN) adopt a coiled-coil conformation. Residues 57–78 (KQELSKRMQEAPNSTASQVHQS) are disordered. Polar residues predominate over residues 67–78 (APNSTASQVHQS).

Belongs to the GpsB family. As to quaternary structure, forms polymers through the coiled coil domains. Interacts with PBP1, MreC and EzrA.

The protein localises to the cytoplasm. In terms of biological role, divisome component that associates with the complex late in its assembly, after the Z-ring is formed, and is dependent on DivIC and PBP2B for its recruitment to the divisome. Together with EzrA, is a key component of the system that regulates PBP1 localization during cell cycle progression. Its main role could be the removal of PBP1 from the cell pole after pole maturation is completed. Also contributes to the recruitment of PBP1 to the division complex. Not essential for septum formation. The protein is Cell cycle protein GpsB of Streptococcus gordonii (strain Challis / ATCC 35105 / BCRC 15272 / CH1 / DL1 / V288).